Reading from the N-terminus, the 205-residue chain is Peptidyl-tRNA hydrolase (205 aa).

Tyr18 is a binding site for tRNA. His23 acts as the Proton acceptor in catalysis. Positions 69, 71, and 117 each coordinate tRNA.

It belongs to the PTH family. Monomer.

The protein localises to the cytoplasm. The catalysed reaction is an N-acyl-L-alpha-aminoacyl-tRNA + H2O = an N-acyl-L-amino acid + a tRNA + H(+). Functionally, hydrolyzes ribosome-free peptidyl-tRNAs (with 1 or more amino acids incorporated), which drop off the ribosome during protein synthesis, or as a result of ribosome stalling. Its function is as follows. Catalyzes the release of premature peptidyl moieties from peptidyl-tRNA molecules trapped in stalled 50S ribosomal subunits, and thus maintains levels of free tRNAs and 50S ribosomes. The chain is Peptidyl-tRNA hydrolase from Synechococcus sp. (strain CC9605).